A 453-amino-acid polypeptide reads, in one-letter code: Glutamate--tRNA ligase 2 (453 aa).

The 'HIGH' region motif lies at 10–20 (PSPTGFLHIGG). Positions 232-236 (KLSKR) match the 'KMSKS' region motif. Lys-235 lines the ATP pocket.

Belongs to the class-I aminoacyl-tRNA synthetase family. Glutamate--tRNA ligase type 1 subfamily. Monomer.

It localises to the cytoplasm. It carries out the reaction tRNA(Glu) + L-glutamate + ATP = L-glutamyl-tRNA(Glu) + AMP + diphosphate. Functionally, catalyzes the attachment of glutamate to tRNA(Glu) in a two-step reaction: glutamate is first activated by ATP to form Glu-AMP and then transferred to the acceptor end of tRNA(Glu). This chain is Glutamate--tRNA ligase 2, found in Wolbachia sp. subsp. Brugia malayi (strain TRS).